Consider the following 200-residue polypeptide: Phospholipase A2 inhibitor CNF (200 aa).

Residues 1 to 19 (MKYLHTICLLFIFVARGNS) form the signal peptide. Intrachain disulfides connect Cys-22–Cys-46, Cys-25–Cys-32, Cys-39–Cys-67, Cys-73–Cys-94, Cys-95–Cys-100, Cys-118–Cys-143, Cys-136–Cys-165, and Cys-169–Cys-191. A glycan (N-linked (GlcNAc...) asparagine; partial) is linked at Asn-176.

In terms of assembly, occurs as a mixture of oligomers. Tetrameric arrangement appears to be the predominant quaternary structure. Interacts with phospholipase A2 crotoxin basic subunit CBd; the interaction leads to dissociation of the CA-CB heterodimer and to inhibition of PLA2 activity of the CB subunit. The carbohydrate moiety increases the inhibition capacity of CNF, but is not essential for activity and for oligomerization. As to expression, expressed by the liver.

Its subcellular location is the secreted. Functionally, inhibits the PLA2 activity of crotoxin (CTX) by replacing the acid subunit (CA) in the CTX complex. Displays a pro-inflammatory action through activation of important main signaling pathways for human leukocytes, in vitro. Abolishes both the muscle-paralyzing and muscle-damaging activities of CTX in mice phrenic nerve-diaphragm muscle preparations. In Crotalus durissus terrificus (South American rattlesnake), this protein is Phospholipase A2 inhibitor CNF.